A 229-amino-acid polypeptide reads, in one-letter code: Calcyclin-binding protein (229 aa).

Position 2 is an N-acetylalanine (A2). Residues 2 to 81 are interaction with SIAH1; that stretch reads ASALEELQKD…YTVKISNYGW (80 aa). Phosphoserine is present on S3. 2 positions are modified to N6-acetyllysine: K10 and K21. S36 carries the post-translational modification Phosphoserine. The segment at 38–59 is disordered; that stretch reads IETELRNKMQQKSQKKPEFDNE. Positions 74–168 constitute a CS domain; it reads VKISNYGWDQ…AENTRWDYLT (95 aa). An interaction with SKP1 region spans residues 74-229; the sequence is VKISNYGWDQ…EKQAREDTEF (156 aa). 2 positions are modified to N6-acetyllysine: K86 and K119. Residues 155 to 229 form an interaction with S100A6 region; sequence CRKKAENTRW…EKQAREDTEF (75 aa). The region spanning 169–229 is the SGS domain; that stretch reads QVEKECKEKE…EKQAREDTEF (61 aa).

As to quaternary structure, component of some large E3 complex at least composed of UBE2D1, SIAH1, CACYBP/SIP, SKP1, APC and TBL1X. Interacts directly with SIAH1, SIAH2 and SKP1. Interacts with protein of the S100 family S100A1, S100A6, S100B, S100P and S100A12 in a calcium-dependent manner. Phosphorylated on serine residues. Phosphorylated upon induction by RA or at high calcium concentrations.

It is found in the nucleus. The protein localises to the cytoplasm. Functionally, may be involved in calcium-dependent ubiquitination and subsequent proteasomal degradation of target proteins. Probably serves as a molecular bridge in ubiquitin E3 complexes. Participates in the ubiquitin-mediated degradation of beta-catenin (CTNNB1). The polypeptide is Calcyclin-binding protein (Cacybp) (Rattus norvegicus (Rat)).